A 399-amino-acid chain; its full sequence is Succinate--CoA ligase [ADP-forming] subunit beta (399 aa).

One can recognise an ATP-grasp domain in the interval 9-254 (KAVLAEFGAP…ESEEDPKEIE (246 aa)). ATP contacts are provided by residues lysine 46, 53–55 (GRG), glutamate 109, alanine 112, and glutamate 117. Mg(2+) contacts are provided by asparagine 209 and aspartate 223. Residues asparagine 274 and 331 to 333 (GIM) contribute to the substrate site.

The protein belongs to the succinate/malate CoA ligase beta subunit family. As to quaternary structure, heterotetramer of two alpha and two beta subunits. Mg(2+) is required as a cofactor.

It carries out the reaction succinate + ATP + CoA = succinyl-CoA + ADP + phosphate. It catalyses the reaction GTP + succinate + CoA = succinyl-CoA + GDP + phosphate. It functions in the pathway carbohydrate metabolism; tricarboxylic acid cycle; succinate from succinyl-CoA (ligase route): step 1/1. In terms of biological role, succinyl-CoA synthetase functions in the citric acid cycle (TCA), coupling the hydrolysis of succinyl-CoA to the synthesis of either ATP or GTP and thus represents the only step of substrate-level phosphorylation in the TCA. The beta subunit provides nucleotide specificity of the enzyme and binds the substrate succinate, while the binding sites for coenzyme A and phosphate are found in the alpha subunit. The sequence is that of Succinate--CoA ligase [ADP-forming] subunit beta from Caulobacter vibrioides (strain NA1000 / CB15N) (Caulobacter crescentus).